Here is a 465-residue protein sequence, read N- to C-terminus: 3-isopropylmalate dehydratase large subunit (465 aa).

Positions 347, 407, and 410 each coordinate [4Fe-4S] cluster.

It belongs to the aconitase/IPM isomerase family. LeuC type 1 subfamily. In terms of assembly, heterodimer of LeuC and LeuD. [4Fe-4S] cluster is required as a cofactor.

It carries out the reaction (2R,3S)-3-isopropylmalate = (2S)-2-isopropylmalate. It participates in amino-acid biosynthesis; L-leucine biosynthesis; L-leucine from 3-methyl-2-oxobutanoate: step 2/4. Functionally, catalyzes the isomerization between 2-isopropylmalate and 3-isopropylmalate, via the formation of 2-isopropylmaleate. The chain is 3-isopropylmalate dehydratase large subunit from Aeromonas hydrophila subsp. hydrophila (strain ATCC 7966 / DSM 30187 / BCRC 13018 / CCUG 14551 / JCM 1027 / KCTC 2358 / NCIMB 9240 / NCTC 8049).